The chain runs to 313 residues: Aspartate carbamoyltransferase catalytic subunit (313 aa).

2 residues coordinate carbamoyl phosphate: R53 and T54. K82 provides a ligand contact to L-aspartate. R103, H131, and Q134 together coordinate carbamoyl phosphate. Residues R163 and R224 each coordinate L-aspartate. The carbamoyl phosphate site is built by L263 and P264.

This sequence belongs to the aspartate/ornithine carbamoyltransferase superfamily. ATCase family. Heterooligomer of catalytic and regulatory chains.

The enzyme catalyses carbamoyl phosphate + L-aspartate = N-carbamoyl-L-aspartate + phosphate + H(+). It functions in the pathway pyrimidine metabolism; UMP biosynthesis via de novo pathway; (S)-dihydroorotate from bicarbonate: step 2/3. Functionally, catalyzes the condensation of carbamoyl phosphate and aspartate to form carbamoyl aspartate and inorganic phosphate, the committed step in the de novo pyrimidine nucleotide biosynthesis pathway. The protein is Aspartate carbamoyltransferase catalytic subunit of Halorubrum lacusprofundi (strain ATCC 49239 / DSM 5036 / JCM 8891 / ACAM 34).